We begin with the raw amino-acid sequence, 170 residues long: Ribosome maturation factor RimM (170 aa).

The region spanning 98 to 170 (PDEYYWVDLE…LIVVDWDPDF (73 aa)) is the PRC barrel domain.

It belongs to the RimM family. As to quaternary structure, binds ribosomal protein uS19.

It is found in the cytoplasm. Functionally, an accessory protein needed during the final step in the assembly of 30S ribosomal subunit, possibly for assembly of the head region. Essential for efficient processing of 16S rRNA. May be needed both before and after RbfA during the maturation of 16S rRNA. It has affinity for free ribosomal 30S subunits but not for 70S ribosomes. This is Ribosome maturation factor RimM from Xanthomonas campestris pv. campestris (strain 8004).